Reading from the N-terminus, the 396-residue chain is Tryptophan synthase beta chain (396 aa).

The residue at position 86 (K86) is an N6-(pyridoxal phosphate)lysine.

The protein belongs to the TrpB family. In terms of assembly, tetramer of two alpha and two beta chains. Requires pyridoxal 5'-phosphate as cofactor.

The enzyme catalyses (1S,2R)-1-C-(indol-3-yl)glycerol 3-phosphate + L-serine = D-glyceraldehyde 3-phosphate + L-tryptophan + H2O. It functions in the pathway amino-acid biosynthesis; L-tryptophan biosynthesis; L-tryptophan from chorismate: step 5/5. The beta subunit is responsible for the synthesis of L-tryptophan from indole and L-serine. This chain is Tryptophan synthase beta chain, found in Aliivibrio fischeri (strain ATCC 700601 / ES114) (Vibrio fischeri).